Reading from the N-terminus, the 109-residue chain is Thiosulfate sulfurtransferase GlpE (109 aa).

A Rhodanese domain is found at 17 to 105 (KEGKTALVDI…WARSYPQDIT (89 aa)). The active-site Cysteine persulfide intermediate is the C65.

The protein belongs to the GlpE family.

It is found in the cytoplasm. It catalyses the reaction thiosulfate + hydrogen cyanide = thiocyanate + sulfite + 2 H(+). The catalysed reaction is thiosulfate + [thioredoxin]-dithiol = [thioredoxin]-disulfide + hydrogen sulfide + sulfite + 2 H(+). Functionally, transferase that catalyzes the transfer of sulfur from thiosulfate to thiophilic acceptors such as cyanide or dithiols. May function in a CysM-independent thiosulfate assimilation pathway by catalyzing the conversion of thiosulfate to sulfite, which can then be used for L-cysteine biosynthesis. This chain is Thiosulfate sulfurtransferase GlpE, found in Yersinia pestis bv. Antiqua (strain Antiqua).